A 623-amino-acid chain; its full sequence is UvrABC system protein C (623 aa).

A GIY-YIG domain is found at 27-105 (GSPGVYRMLD…IKQLKPRYNV (79 aa)). The region spanning 215–250 (TKVQANLAEQMQAASEAMEFERAAALRDRIKALTQV) is the UVR domain.

The protein belongs to the UvrC family. As to quaternary structure, interacts with UvrB in an incision complex.

Its subcellular location is the cytoplasm. Functionally, the UvrABC repair system catalyzes the recognition and processing of DNA lesions. UvrC both incises the 5' and 3' sides of the lesion. The N-terminal half is responsible for the 3' incision and the C-terminal half is responsible for the 5' incision. This chain is UvrABC system protein C, found in Cereibacter sphaeroides (strain ATCC 17023 / DSM 158 / JCM 6121 / CCUG 31486 / LMG 2827 / NBRC 12203 / NCIMB 8253 / ATH 2.4.1.) (Rhodobacter sphaeroides).